The primary structure comprises 234 residues: Synaptogyrin-1 (234 aa).

Met-1 carries the post-translational modification N-acetylmethionine. Topologically, residues 1-23 (MEGGAYGAGKAGGAFDPYTLVRQ) are cytoplasmic. The MARVEL domain occupies 20-173 (LVRQPHTILR…QAVLAFQRYQ (154 aa)). The helical transmembrane segment at 24–44 (PHTILRVVSWVFSIVVFGSIV) threads the bilayer. Residues 45–71 (NEGYLNNPEEEEEFCIYNRNPNACSYG) are Lumenal-facing. Residues 72–92 (VTVGVLAFLTCLVYLALDVYF) traverse the membrane as a helical segment. The Cytoplasmic portion of the chain corresponds to 93–104 (PQISSVKDRKKA). Residues 105–125 (VLSDIGVSAFWAFFWFVGFCF) traverse the membrane as a helical segment. The Lumenal portion of the chain corresponds to 126–148 (LANQWQVSKPKDNPLNEGTDAAR). Residues 149–169 (AAIAFSFFSIFTWAGQAVLAF) traverse the membrane as a helical segment. At 170–234 (QRYQIGADSA…EPQGYQSQGY (65 aa)) the chain is on the cytoplasmic side. A disordered region spans residues 201-234 (EPSAGSDPTGMGGTYQHPANAFDAEPQGYQSQGY).

It belongs to the synaptogyrin family. Nervous system (at protein level).

It localises to the cytoplasmic vesicle. Its subcellular location is the secretory vesicle. The protein localises to the synaptic vesicle membrane. The protein resides in the melanosome. Functionally, may play a role in regulated exocytosis. Modulates the localization of synaptophysin/SYP into synaptic-like microvesicles and may therefore play a role in synaptic-like microvesicle formation and/or maturation. Involved in the regulation of short-term and long-term synaptic plasticity. The protein is Synaptogyrin-1 of Rattus norvegicus (Rat).